Consider the following 129-residue polypeptide: Fluoride-specific ion channel FluC (129 aa).

4 helical membrane-spanning segments follow: residues 8–28 (ILLVGVGGFLGSVARYLVALW), 34–54 (AVFPFATLTVNLLGSFLIGFI), 70–90 (IFLVTGFCGGFTTFSSYMIEH), and 102–122 (AALYLFGSLIGGFIALYLGII). Glycine 78 and threonine 81 together coordinate Na(+).

The protein belongs to the fluoride channel Fluc/FEX (TC 1.A.43) family.

It is found in the cell inner membrane. It carries out the reaction fluoride(in) = fluoride(out). With respect to regulation, na(+) is not transported, but it plays an essential structural role and its presence is essential for fluoride channel function. In terms of biological role, fluoride-specific ion channel. Important for reducing fluoride concentration in the cell, thus reducing its toxicity. This is Fluoride-specific ion channel FluC from Chlorobium chlorochromatii (strain CaD3).